Reading from the N-terminus, the 245-residue chain is Biosynthetic peptidoglycan transglycosylase (245 aa).

Residues 10-30 form a helical membrane-spanning segment; sequence FLALLFVVATLAQLWYLGQVL. A disordered region spans residues 224 to 245; the sequence is DPGTVPLPPPPEPTAPPEGNTQ. Residues 226–239 are compositionally biased toward pro residues; it reads GTVPLPPPPEPTAP.

It belongs to the glycosyltransferase 51 family.

Its subcellular location is the cell inner membrane. It carries out the reaction [GlcNAc-(1-&gt;4)-Mur2Ac(oyl-L-Ala-gamma-D-Glu-L-Lys-D-Ala-D-Ala)](n)-di-trans,octa-cis-undecaprenyl diphosphate + beta-D-GlcNAc-(1-&gt;4)-Mur2Ac(oyl-L-Ala-gamma-D-Glu-L-Lys-D-Ala-D-Ala)-di-trans,octa-cis-undecaprenyl diphosphate = [GlcNAc-(1-&gt;4)-Mur2Ac(oyl-L-Ala-gamma-D-Glu-L-Lys-D-Ala-D-Ala)](n+1)-di-trans,octa-cis-undecaprenyl diphosphate + di-trans,octa-cis-undecaprenyl diphosphate + H(+). Its pathway is cell wall biogenesis; peptidoglycan biosynthesis. Peptidoglycan polymerase that catalyzes glycan chain elongation from lipid-linked precursors. The protein is Biosynthetic peptidoglycan transglycosylase of Alcanivorax borkumensis (strain ATCC 700651 / DSM 11573 / NCIMB 13689 / SK2).